A 168-amino-acid polypeptide reads, in one-letter code: MDSGKTFDSISNDLFLEILLRLSTKSIDRSRCVSKQWASILCSQDFTESEKFNFINASSFLFSSTKLINYKGKLGGIDLAYNHGGVYPVELRMWVLEDVEKHEWSRHVYSLPETIEFQQCNYNICVGGMNAIGFEDYLNRRVYAFVDYVEDLSVNDAMQLKSSSLQNG.

One can recognise an F-box domain in the interval 5–52; it reads KTFDSISNDLFLEILLRLSTKSIDRSRCVSKQWASILCSQDFTESEKF.

The protein is Putative F-box protein At1g30945 of Arabidopsis thaliana (Mouse-ear cress).